The following is a 264-amino-acid chain: Iodotyrosine deiodinase (264 aa).

FMN is bound by residues 75 to 79 (RRTVR) and 103 to 104 (SG). Alanine 105, glutamate 132, tyrosine 136, and lysine 157 together coordinate 3-iodo-L-tyrosine. Residues 212–214 (TST) and arginine 254 contribute to the FMN site.

Belongs to the nitroreductase family. Requires FMN as cofactor.

It catalyses the reaction 2 iodide + L-tyrosine + 2 NADP(+) = 3,5-diiodo-L-tyrosine + 2 NADPH + H(+). The catalysed reaction is iodide + L-tyrosine + NADP(+) = 3-iodo-L-tyrosine + NADPH. It carries out the reaction 3-iodo-L-tyrosine + iodide + NADP(+) = 3,5-diiodo-L-tyrosine + NADPH + H(+). The enzyme catalyses L-tyrosine + chloride + NADP(+) = 3-chloro-L-tyrosine + NADPH. It catalyses the reaction bromide + L-tyrosine + NADP(+) = 3-bromo-L-tyrosine + NADPH. Its function is as follows. Catalyzes the dehalogenation of halotyrosines such as 3,5-diiodo-L-tyrosine. Likely to also catalyze the dehalogenation of other halotyrosines such as 3-bromo-L-tyrosine, 3-chloro-L-tyrosine and 3-iodo-L-tyrosine. This Nematostella vectensis (Starlet sea anemone) protein is Iodotyrosine deiodinase.